The primary structure comprises 323 residues: Prostaglandin F synthase 1 (323 aa).

NADP(+)-binding positions include 20–24 and Asp-50; that span reads GFGTY. The active-site Proton donor is the Tyr-55. His-117 lines the substrate pocket. NADP(+) is bound by residues 166–167, Gln-190, 216–221, and 270–280; these read SN, YAALGA, and KSFNKKRIKEN.

It belongs to the aldo/keto reductase family. Monomer. The N-terminus is blocked.

The protein localises to the cytoplasm. It catalyses the reaction prostaglandin F2alpha + NADP(+) = prostaglandin D2 + NADPH + H(+). It functions in the pathway lipid metabolism; prostaglandin biosynthesis. Catalyzes the reduction of PGD(2) and PGH(2) to PGF(2 alpha) and a stereoisomer, respectively. It has a broad substrate specificity and also reduces other carbonyl compounds. This chain is Prostaglandin F synthase 1, found in Bos taurus (Bovine).